Consider the following 118-residue polypeptide: Large ribosomal subunit protein uL22c (118 aa).

This sequence belongs to the universal ribosomal protein uL22 family. In terms of assembly, part of the 50S ribosomal subunit.

Its subcellular location is the plastid. It localises to the organellar chromatophore. Functionally, this protein binds specifically to 23S rRNA. In terms of biological role, the globular domain of the protein is located near the polypeptide exit tunnel on the outside of the subunit, while an extended beta-hairpin is found that lines the wall of the exit tunnel in the center of the 70S ribosome. This Paulinella chromatophora protein is Large ribosomal subunit protein uL22c (rpl22).